Here is a 182-residue protein sequence, read N- to C-terminus: Small ribosomal subunit protein uS4c (182 aa).

Positions 13 to 34 (GLTSKRPRSGSDPKNQLRSGKR) are disordered. Residues 82-143 (MRLDNILFRL…KQRSKALIQN (62 aa)) enclose the S4 RNA-binding domain.

This sequence belongs to the universal ribosomal protein uS4 family. Part of the 30S ribosomal subunit. Contacts protein S5. The interaction surface between S4 and S5 is involved in control of translational fidelity.

It localises to the plastid. The protein localises to the chloroplast. Functionally, one of the primary rRNA binding proteins, it binds directly to 16S rRNA where it nucleates assembly of the body of the 30S subunit. Its function is as follows. With S5 and S12 plays an important role in translational accuracy. In Iris lutescens (Crimean iris), this protein is Small ribosomal subunit protein uS4c (rps4).